The sequence spans 101 residues: Replication restart protein PriB (101 aa).

The 101-residue stretch at 1–101 (MTTNNLVLSG…IHAENVELKT (101 aa)) folds into the SSB domain.

This sequence belongs to the PriB family. In terms of assembly, homodimer. Interacts with PriA and DnaT. Component of the replication restart primosome. Primosome assembly occurs via a 'hand-off' mechanism. PriA binds to replication forks, subsequently PriB then DnaT bind; DnaT then displaces ssDNA to generate the helicase loading substrate.

Its function is as follows. Involved in the restart of stalled replication forks, which reloads the replicative helicase on sites other than the origin of replication; the PriA-PriB pathway is the major replication restart pathway. During primosome assembly it facilitates complex formation between PriA and DnaT on DNA; stabilizes PriA on DNA. Stimulates the DNA unwinding activity of PriA helicase. The protein is Replication restart protein PriB of Shewanella baltica (strain OS223).